Consider the following 221-residue polypeptide: Ribose-5-phosphate isomerase A (221 aa).

Substrate contacts are provided by residues 26-29, 81-84, and 94-97; these read TGST, DGAD, and KGGG. E103 serves as the catalytic Proton acceptor. Residue K121 coordinates substrate.

This sequence belongs to the ribose 5-phosphate isomerase family. Homodimer.

The enzyme catalyses aldehydo-D-ribose 5-phosphate = D-ribulose 5-phosphate. It participates in carbohydrate degradation; pentose phosphate pathway; D-ribose 5-phosphate from D-ribulose 5-phosphate (non-oxidative stage): step 1/1. Its function is as follows. Catalyzes the reversible conversion of ribose-5-phosphate to ribulose 5-phosphate. This chain is Ribose-5-phosphate isomerase A, found in Bacillus mycoides (strain KBAB4) (Bacillus weihenstephanensis).